The chain runs to 283 residues: Glutamate racemase (283 aa).

Residues 28–29 (DS) and 60–61 (YG) contribute to the substrate site. The active-site Proton donor/acceptor is the C92. Position 93 to 94 (93 to 94 (NS)) interacts with substrate. C204 serves as the catalytic Proton donor/acceptor. Residue 205 to 206 (TH) coordinates substrate.

The protein belongs to the aspartate/glutamate racemases family.

The enzyme catalyses L-glutamate = D-glutamate. Its pathway is cell wall biogenesis; peptidoglycan biosynthesis. Its function is as follows. Provides the (R)-glutamate required for cell wall biosynthesis. This chain is Glutamate racemase, found in Erwinia tasmaniensis (strain DSM 17950 / CFBP 7177 / CIP 109463 / NCPPB 4357 / Et1/99).